The chain runs to 351 residues: N-acetyl-gamma-glutamyl-phosphate reductase (351 aa).

Cys154 is an active-site residue.

Belongs to the NAGSA dehydrogenase family. Type 1 subfamily.

It is found in the cytoplasm. It catalyses the reaction N-acetyl-L-glutamate 5-semialdehyde + phosphate + NADP(+) = N-acetyl-L-glutamyl 5-phosphate + NADPH + H(+). The protein operates within amino-acid biosynthesis; L-arginine biosynthesis; N(2)-acetyl-L-ornithine from L-glutamate: step 3/4. Functionally, catalyzes the NADPH-dependent reduction of N-acetyl-5-glutamyl phosphate to yield N-acetyl-L-glutamate 5-semialdehyde. This is N-acetyl-gamma-glutamyl-phosphate reductase from Prochlorococcus marinus (strain MIT 9515).